A 320-amino-acid chain; its full sequence is UDP-3-O-acyl-N-acetylglucosamine deacetylase (320 aa).

His92, His251, and Asp255 together coordinate Zn(2+). Catalysis depends on His278, which acts as the Proton donor.

This sequence belongs to the LpxC family. Zn(2+) is required as a cofactor.

The enzyme catalyses a UDP-3-O-[(3R)-3-hydroxyacyl]-N-acetyl-alpha-D-glucosamine + H2O = a UDP-3-O-[(3R)-3-hydroxyacyl]-alpha-D-glucosamine + acetate. Its pathway is glycolipid biosynthesis; lipid IV(A) biosynthesis; lipid IV(A) from (3R)-3-hydroxytetradecanoyl-[acyl-carrier-protein] and UDP-N-acetyl-alpha-D-glucosamine: step 2/6. Catalyzes the hydrolysis of UDP-3-O-myristoyl-N-acetylglucosamine to form UDP-3-O-myristoylglucosamine and acetate, the committed step in lipid A biosynthesis. The polypeptide is UDP-3-O-acyl-N-acetylglucosamine deacetylase (Psychrobacter cryohalolentis (strain ATCC BAA-1226 / DSM 17306 / VKM B-2378 / K5)).